Here is a 400-residue protein sequence, read N- to C-terminus: Argininosuccinate synthase (400 aa).

8–16 (AYSGGLDTS) serves as a coordination point for ATP. Residues Y87 and S92 each coordinate L-citrulline. G117 serves as a coordination point for ATP. T119, N123, and D124 together coordinate L-aspartate. N123 contacts L-citrulline. Residues R127, S175, E259, and Y271 each contribute to the L-citrulline site.

This sequence belongs to the argininosuccinate synthase family. Type 1 subfamily. Homotetramer.

Its subcellular location is the cytoplasm. It catalyses the reaction L-citrulline + L-aspartate + ATP = 2-(N(omega)-L-arginino)succinate + AMP + diphosphate + H(+). It functions in the pathway amino-acid biosynthesis; L-arginine biosynthesis; L-arginine from L-ornithine and carbamoyl phosphate: step 2/3. This is Argininosuccinate synthase from Frankia alni (strain DSM 45986 / CECT 9034 / ACN14a).